We begin with the raw amino-acid sequence, 95 residues long: PqqA binding protein (95 aa).

This sequence belongs to the PqqD family. As to quaternary structure, monomer. Interacts with PqqE.

It functions in the pathway cofactor biosynthesis; pyrroloquinoline quinone biosynthesis. Functionally, functions as a PqqA binding protein and presents PqqA to PqqE, in the pyrroloquinoline quinone (PQQ) biosynthetic pathway. This Rahnella aquatilis protein is PqqA binding protein.